A 697-amino-acid chain; its full sequence is Polyribonucleotide nucleotidyltransferase (697 aa).

Positions 490 and 496 each coordinate Mg(2+). Residues 557–616 enclose the KH domain; that stretch reads PKVVTMTIKPEKIRDVIGPGGKKINEIIDETGVKLDIEQDGTIFIGAVDKDAIARARSII. Positions 626 to 694 constitute an S1 motif domain; the sequence is GQVYEGKVKR…KQGRVNASHK (69 aa).

The protein belongs to the polyribonucleotide nucleotidyltransferase family. It depends on Mg(2+) as a cofactor.

The protein resides in the cytoplasm. The catalysed reaction is RNA(n+1) + phosphate = RNA(n) + a ribonucleoside 5'-diphosphate. Its function is as follows. Involved in mRNA degradation. Catalyzes the phosphorolysis of single-stranded polyribonucleotides processively in the 3'- to 5'-direction. The sequence is that of Polyribonucleotide nucleotidyltransferase from Staphylococcus saprophyticus subsp. saprophyticus (strain ATCC 15305 / DSM 20229 / NCIMB 8711 / NCTC 7292 / S-41).